We begin with the raw amino-acid sequence, 222 residues long: 7-cyano-7-deazaguanine synthase (222 aa).

Position 9–19 (9–19 (LSGGLDSATAA)) interacts with ATP. Zn(2+) is bound by residues Cys-190, Cys-198, Cys-201, and Cys-204.

It belongs to the QueC family. Requires Zn(2+) as cofactor.

It carries out the reaction 7-carboxy-7-deazaguanine + NH4(+) + ATP = 7-cyano-7-deazaguanine + ADP + phosphate + H2O + H(+). It participates in purine metabolism; 7-cyano-7-deazaguanine biosynthesis. Its function is as follows. Catalyzes the ATP-dependent conversion of 7-carboxy-7-deazaguanine (CDG) to 7-cyano-7-deazaguanine (preQ(0)). The chain is 7-cyano-7-deazaguanine synthase from Synechococcus sp. (strain RCC307).